Reading from the N-terminus, the 683-residue chain is MSAQDFLVELGTEELPPKALASLGDAFLAGIEKGLQAAGLNYTGKQVYAAPRRLAVLIRQLDVQQPDRSINIDGPPMQAAFKDGEPTQAALGFAKKCGVELAEIDQSGAKLRFSQHIPGKATASLLPTIIEDSLNDLPIPKRMRWAASREEFVRPTQWLVMLLGDQVVDCTILSQKAGRESRGHRFHHPENVVITTPANYVEDLRKAYVLADFAERRELISKRTAELAMQQEGTAIVPPALLDEVTALVEWPVPLVCSFEERFLEVPQEALITTMQDNQKYFCLLDSEGKLLPRFITVANVESRDPKQIVQGNEKVVRPRLTDAEFFFKQDKKQPLETFNERLKNVVFQAQLGTVYDKAERVSKLAAFIAPLIGGDAQRAGRAGLLSKCDLATEMVGEFPEMQGVAGYYYALNDGEPQDVALALNEQYMPRGAGAELPQTLTGAAVAIADKLDTLVGIFGIGMLPTGSKDPYALRRAALGVLRILIEKQLDLNLTGAVEFAVKQFGAKVKAAGLAEQVLEFIFDRLRARYEDEGIDVATYLSVRALQPGSALDFDQRVQAVQAFRKLPEAEALAAVNKRVSNLLSKAEGAIAEQVEPKYFDNANEFSLYSAIQQADQAVQPMAAARQYSESLARLAALRDPVDAFFEAVMVNAEDAKVRANRYALLSRLRGLFLGVADISLLG.

Belongs to the class-II aminoacyl-tRNA synthetase family. As to quaternary structure, tetramer of two alpha and two beta subunits.

The protein resides in the cytoplasm. It carries out the reaction tRNA(Gly) + glycine + ATP = glycyl-tRNA(Gly) + AMP + diphosphate. This Pseudomonas putida (strain GB-1) protein is Glycine--tRNA ligase beta subunit.